The sequence spans 670 residues: UvrABC system protein B (670 aa).

A Helicase ATP-binding domain is found at 51–433; it reads DGLKKGEPFQ…SSRVVEQIIR (383 aa). Residue 64 to 71 participates in ATP binding; it reads GVTGSGKT. Residues 117 to 140 carry the Beta-hairpin motif; the sequence is YYDYYQPESYLPAKDQYIEKDAMI. The Helicase C-terminal domain maps to 453–612; that stretch reads DVMQEIRKIV…IVPTTIRKPI (160 aa). Residues 631 to 666 form the UVR domain; that stretch reads PNVIIELDAEMREAADRLDFERAIQVRELIKKLEKE.

The protein belongs to the UvrB family. As to quaternary structure, forms a heterotetramer with UvrA during the search for lesions. Interacts with UvrC in an incision complex.

It is found in the cytoplasm. In terms of biological role, the UvrABC repair system catalyzes the recognition and processing of DNA lesions. A damage recognition complex composed of 2 UvrA and 2 UvrB subunits scans DNA for abnormalities. Upon binding of the UvrA(2)B(2) complex to a putative damaged site, the DNA wraps around one UvrB monomer. DNA wrap is dependent on ATP binding by UvrB and probably causes local melting of the DNA helix, facilitating insertion of UvrB beta-hairpin between the DNA strands. Then UvrB probes one DNA strand for the presence of a lesion. If a lesion is found the UvrA subunits dissociate and the UvrB-DNA preincision complex is formed. This complex is subsequently bound by UvrC and the second UvrB is released. If no lesion is found, the DNA wraps around the other UvrB subunit that will check the other stand for damage. The protein is UvrABC system protein B of Methanosarcina mazei (strain ATCC BAA-159 / DSM 3647 / Goe1 / Go1 / JCM 11833 / OCM 88) (Methanosarcina frisia).